Here is a 509-residue protein sequence, read N- to C-terminus: Histidine ammonia-lyase (509 aa).

The 5-imidazolinone (Ala-Gly) cross-link spans 144-146; that stretch reads ASG. S145 is subject to 2,3-didehydroalanine (Ser).

Belongs to the PAL/histidase family. In terms of processing, contains an active site 4-methylidene-imidazol-5-one (MIO), which is formed autocatalytically by cyclization and dehydration of residues Ala-Ser-Gly.

The protein localises to the cytoplasm. The catalysed reaction is L-histidine = trans-urocanate + NH4(+). Its pathway is amino-acid degradation; L-histidine degradation into L-glutamate; N-formimidoyl-L-glutamate from L-histidine: step 1/3. The polypeptide is Histidine ammonia-lyase (Rhodospirillum centenum (strain ATCC 51521 / SW)).